A 90-amino-acid polypeptide reads, in one-letter code: Auxin-responsive protein SAUR22 (90 aa).

The protein belongs to the ARG7 family.

The protein localises to the cell membrane. In terms of biological role, functions as a positive effector of cell expansion through modulation of auxin transport. The chain is Auxin-responsive protein SAUR22 from Arabidopsis thaliana (Mouse-ear cress).